Here is a 237-residue protein sequence, read N- to C-terminus: Sugar fermentation stimulation protein homolog (237 aa).

It belongs to the SfsA family.

The protein is Sugar fermentation stimulation protein homolog of Methylobacterium radiotolerans (strain ATCC 27329 / DSM 1819 / JCM 2831 / NBRC 15690 / NCIMB 10815 / 0-1).